The following is a 173-amino-acid chain: Crossover junction endodeoxyribonuclease RuvC (173 aa).

Residues Asp-8, Glu-67, and Asp-139 contribute to the active site. Asp-8, Glu-67, and Asp-139 together coordinate Mg(2+).

The protein belongs to the RuvC family. In terms of assembly, homodimer which binds Holliday junction (HJ) DNA. The HJ becomes 2-fold symmetrical on binding to RuvC with unstacked arms; it has a different conformation from HJ DNA in complex with RuvA. In the full resolvosome a probable DNA-RuvA(4)-RuvB(12)-RuvC(2) complex forms which resolves the HJ. It depends on Mg(2+) as a cofactor.

It is found in the cytoplasm. The catalysed reaction is Endonucleolytic cleavage at a junction such as a reciprocal single-stranded crossover between two homologous DNA duplexes (Holliday junction).. In terms of biological role, the RuvA-RuvB-RuvC complex processes Holliday junction (HJ) DNA during genetic recombination and DNA repair. Endonuclease that resolves HJ intermediates. Cleaves cruciform DNA by making single-stranded nicks across the HJ at symmetrical positions within the homologous arms, yielding a 5'-phosphate and a 3'-hydroxyl group; requires a central core of homology in the junction. The consensus cleavage sequence is 5'-(A/T)TT(C/G)-3'. Cleavage occurs on the 3'-side of the TT dinucleotide at the point of strand exchange. HJ branch migration catalyzed by RuvA-RuvB allows RuvC to scan DNA until it finds its consensus sequence, where it cleaves and resolves the cruciform DNA. This Sodalis glossinidius (strain morsitans) protein is Crossover junction endodeoxyribonuclease RuvC.